The following is a 140-amino-acid chain: Large ribosomal subunit protein uL16 (140 aa).

The protein belongs to the universal ribosomal protein uL16 family. As to quaternary structure, part of the 50S ribosomal subunit.

Its function is as follows. Binds 23S rRNA and is also seen to make contacts with the A and possibly P site tRNAs. This Phytoplasma mali (strain AT) protein is Large ribosomal subunit protein uL16.